The following is a 140-amino-acid chain: Putative pre-16S rRNA nuclease (140 aa).

This sequence belongs to the YqgF nuclease family.

The protein resides in the cytoplasm. Its function is as follows. Could be a nuclease involved in processing of the 5'-end of pre-16S rRNA. This Yersinia enterocolitica serotype O:8 / biotype 1B (strain NCTC 13174 / 8081) protein is Putative pre-16S rRNA nuclease.